A 445-amino-acid chain; its full sequence is Methylphloroacetophenone oxidase (445 aa).

A helical membrane pass occupies residues valine 25–valine 45. An N-linked (GlcNAc...) asparagine glycan is attached at asparagine 51.

It belongs to the cytochrome P450 family.

The protein localises to the membrane. It participates in secondary metabolite biosynthesis. Functionally, methylphloroacetophenone oxidase; part of the gene cluster that mediates the biosynthesis of usnic acid, a dibenzofuran lichen product possessing a broad spectrum of biological activities. Two genes, mpas and mpao, comprise the usnic acid biosynthetic gene cluster with a single post-PKS enzyme, the methylphloracetophenone oxidase (mpao). The methylphloroacetophenone synthase (mpas) is a non-reducing polyketide synthase that produces methylphloracetophenone from acetate via a methylated tetraketide intermediate. The methylphloroacetophenone oxidase then carries out the oxidative dimerization of methylphloracetophenone to usnic acid. This Cladonia uncialis (Cup lichen) protein is Methylphloroacetophenone oxidase.